The following is a 121-amino-acid chain: Holo-[acyl-carrier-protein] synthase (121 aa).

The Mg(2+) site is built by Asp5 and Glu50.

The protein belongs to the P-Pant transferase superfamily. AcpS family. It depends on Mg(2+) as a cofactor.

It is found in the cytoplasm. It carries out the reaction apo-[ACP] + CoA = holo-[ACP] + adenosine 3',5'-bisphosphate + H(+). In terms of biological role, transfers the 4'-phosphopantetheine moiety from coenzyme A to a Ser of acyl-carrier-protein. The chain is Holo-[acyl-carrier-protein] synthase from Sulfurimonas denitrificans (strain ATCC 33889 / DSM 1251) (Thiomicrospira denitrificans (strain ATCC 33889 / DSM 1251)).